Here is a 362-residue protein sequence, read N- to C-terminus: MSTNSSIQPVSPESELLSNTTCQLEEDLSISFSIIFMTVGILSNSLAIAILMKAYQRFRQKYKSSFLLLASALVITDFFGHLINGTIAVFVYASDKDWIYFDKSNILCSIFGICMVFSGLCPLFLGSLMAIERCIGVTKPIFHSTKITTKHVKMMLSGVCFFAVFVALLPILGHRDYKIQASRTWCFYKTDEIKDWEDRFYLLLFAFLGLLALGISFVCNAITGISLLKVKFRSQQHRQGRSHHFEMVIQLLGIMCVSCICWSPFLVTMASIGMNIQDFKDSCERTLFTLRMATWNQILDPWVYILLRKAVLRNLYVCTRRCCGVHVISLHVWELSSIKDSLKVAAISDLPVTEKVTQQTST.

Residues 1-31 are Extracellular-facing; that stretch reads MSTNSSIQPVSPESELLSNTTCQLEEDLSIS. N-linked (GlcNAc...) asparagine glycosylation is found at N4 and N19. Residues 32–54 form a helical membrane-spanning segment; it reads FSIIFMTVGILSNSLAIAILMKA. The Cytoplasmic segment spans residues 55–69; sequence YQRFRQKYKSSFLLL. The helical transmembrane segment at 70–90 threads the bilayer; that stretch reads ASALVITDFFGHLINGTIAVF. The Extracellular segment spans residues 91–109; it reads VYASDKDWIYFDKSNILCS. C108 and C186 are disulfide-bonded. A helical membrane pass occupies residues 110–131; sequence IFGICMVFSGLCPLFLGSLMAI. Topologically, residues 132–152 are cytoplasmic; sequence ERCIGVTKPIFHSTKITTKHV. Residues 153–175 traverse the membrane as a helical segment; sequence KMMLSGVCFFAVFVALLPILGHR. The Extracellular segment spans residues 176–198; the sequence is DYKIQASRTWCFYKTDEIKDWED. A helical membrane pass occupies residues 199–224; that stretch reads RFYLLLFAFLGLLALGISFVCNAITG. Residues 225–250 lie on the Cytoplasmic side of the membrane; sequence ISLLKVKFRSQQHRQGRSHHFEMVIQ. Residues 251–267 traverse the membrane as a helical segment; the sequence is LLGIMCVSCICWSPFLV. Over 268-285 the chain is Extracellular; it reads TMASIGMNIQDFKDSCER. A helical transmembrane segment spans residues 286-307; it reads TLFTLRMATWNQILDPWVYILL. Residues 308 to 362 are Cytoplasmic-facing; it reads RKAVLRNLYVCTRRCCGVHVISLHVWELSSIKDSLKVAAISDLPVTEKVTQQTST.

The protein belongs to the G-protein coupled receptor 1 family.

The protein localises to the cell membrane. Functionally, receptor for prostaglandin F2-alpha (PGF2-alpha). The activity of this receptor is mediated by G proteins which activate a phosphatidylinositol-calcium second messenger system. Initiates luteolysis in the corpus luteum. This is Prostaglandin F2-alpha receptor (PTGFR) from Bos taurus (Bovine).